The following is a 258-amino-acid chain: Venom plasminogen activator (258 aa).

A signal peptide spans 1–18 (MVLIRVLANLLILQLSYA). Residues 19–24 (QKSSEL) constitute a propeptide that is removed on maturation. Positions 25-249 (VVGGDECNIN…YTDWIQSIIS (225 aa)) constitute a Peptidase S1 domain. Intrachain disulfides connect Cys31–Cys163, Cys50–Cys66, Cys98–Cys256, Cys142–Cys210, Cys174–Cys189, and Cys200–Cys225. The N-linked (GlcNAc...) asparagine glycan is linked to Asn44. Active-site charge relay system residues include His65 and Asp110. Ser204 acts as the Charge relay system in catalysis.

It belongs to the peptidase S1 family. Snake venom subfamily. As to quaternary structure, monomer. As to expression, expressed by the venom gland.

The protein resides in the secreted. Snake venom serine protease that activates plasminogen. Shows a preferential cleavage at Arg-|-Xaa instead of Lys-|-Xaa bonds. The protein is Venom plasminogen activator of Agkistrodon piscivorus leucostoma (Western cottonmouth).